The sequence spans 446 residues: Na(+)-translocating NADH-quinone reductase subunit A (446 aa).

It belongs to the NqrA family. In terms of assembly, composed of six subunits; NqrA, NqrB, NqrC, NqrD, NqrE and NqrF.

The enzyme catalyses a ubiquinone + n Na(+)(in) + NADH + H(+) = a ubiquinol + n Na(+)(out) + NAD(+). Functionally, NQR complex catalyzes the reduction of ubiquinone-1 to ubiquinol by two successive reactions, coupled with the transport of Na(+) ions from the cytoplasm to the periplasm. NqrA to NqrE are probably involved in the second step, the conversion of ubisemiquinone to ubiquinol. The chain is Na(+)-translocating NADH-quinone reductase subunit A from Vibrio atlanticus (strain LGP32) (Vibrio splendidus (strain Mel32)).